The following is a 347-amino-acid chain: Protein-arginine kinase (347 aa).

A Phosphagen kinase C-terminal domain is found at 22–247; the sequence is LVVSTRIRLA…EQVIQAERHA (226 aa). ATP-binding positions include 25–29, H85, R118, 169–173, and 200–205; these read STRIR, RASVM, and RGRYGE. The RDXXRA motif of the pArg binding pocket involved in allosteric regulation motif lies at 330 to 335; the sequence is RDRERA.

This sequence belongs to the ATP:guanido phosphotransferase family.

It catalyses the reaction L-arginyl-[protein] + ATP = N(omega)-phospho-L-arginyl-[protein] + ADP + H(+). With respect to regulation, appears to be allosterically activated by the binding of pArg-containing polypeptides to the pArg-binding pocket localized in the C-terminal domain of McsB. Functionally, catalyzes the specific phosphorylation of arginine residues in proteins. This chain is Protein-arginine kinase, found in Exiguobacterium sp. (strain ATCC BAA-1283 / AT1b).